Here is a 937-residue protein sequence, read N- to C-terminus: Protocadherin alpha-7 (937 aa).

A signal peptide spans 1-29 (MVNLRGYNWKSQQLLLFLIIVAAWEAGSG). Residues 30–697 (QLHYSVPEEA…RVDQRLVDVN (668 aa)) lie on the Extracellular side of the membrane. 6 Cadherin domains span residues 34 to 133 (SVPE…PPMF), 157 to 242 (ASDA…APVF), 243 to 350 (DRSL…APQL), 351 to 455 (TVSS…APLF), 456 to 565 (AQPE…APTL), and 587 to 682 (PGQV…SSKV). Cysteines 96 and 102 form a disulfide. O-linked (Man) threonine glycans are attached at residues Thr223 and Thr225. 2 N-linked (GlcNAc...) asparagine glycosylation sites follow: Asn257 and Asn265. An O-linked (Man) threonine glycan is attached at Thr438. An O-linked (Man) serine glycan is attached at Ser478. Asn548 is a glycosylation site (N-linked (GlcNAc...) asparagine). The helical transmembrane segment at 698–718 (VYLIIAICAVSSLLVLTLLLY) threads the bilayer. Residues 719 to 937 (TALRCSATPT…GNSTTDNSDQ (219 aa)) lie on the Cytoplasmic side of the membrane. Disordered regions lie at residues 755–794 (RQRVCSGEGPPKTDLMAFSPSLPQGPSSTDNPRQPNPDWR) and 816–843 (RAGPGGPDQQWPTVSSATPEPEAGEVSP). PXXP repeat units lie at residues 774–777 (PSLP), 786–789 (PRQP), 819–822 (PGGP), 860–863 (PGNP), and 878–881 (PGSP). Positions 774–881 (PSLPQGPSST…PDKFIIPGSP (108 aa)) are 5 X 4 AA repeats of P-X-X-P. Residues 775-787 (SLPQGPSSTDNPR) are compositionally biased toward polar residues. Residues 887–937 (RQEPANNQIDKSDFITFGKKEETKKKKKKKKGNKTQEKKEKGNSTTDNSDQ) form a disordered region. Residues 896 to 910 (DKSDFITFGKKEETK) are compositionally biased toward basic and acidic residues.

As to quaternary structure, forms homodimers in trans (molecules expressed by two different cells). Forms promiscuous heterodimers in cis (at the plasma membrane of the same cell) with other protocadherins.

Its subcellular location is the cell membrane. Functionally, calcium-dependent cell-adhesion protein involved in cells self-recognition and non-self discrimination. Thereby, it is involved in the establishment and maintenance of specific neuronal connections in the brain. The sequence is that of Protocadherin alpha-7 from Mus musculus (Mouse).